A 301-amino-acid chain; its full sequence is Mitochondrial substrate carrier family protein Z (301 aa).

Residues 1 to 19 are Mitochondrial intermembrane-facing; the sequence is MTGKEENKQQQHVNFPWKR. 3 Solcar repeats span residues 14 to 101, 116 to 200, and 210 to 293; these read NFPW…FTEQ, QQFG…ISDY, and LPVW…VMGI. Residues 20–37 form a helical membrane-spanning segment; that stretch reads LVAGAVAGTADVWACHPL. The Mitochondrial matrix portion of the chain corresponds to 38–65; that stretch reads DRIKTQLQNNPGKSIVGTFGDIVSKGKG. A helical transmembrane segment spans residues 66-86; the sequence is FTGGVNALYEGILPMTAEAIF. Residues 87-117 lie on the Mitochondrial intermembrane side of the membrane; that stretch reads KVGIRYFAFSWFTEQYKTTVYKGETLNKKQQ. The chain crosses the membrane as a helical span at residues 118–138; it reads FGANLLGGAFAGTIESFVVVI. The Mitochondrial matrix segment spans residues 139 to 174; the sequence is PCELLKVRHMTQEHNKSFGTVFRDVLREEGFQGLYK. Residues 175-191 form a helical membrane-spanning segment; sequence GGSATLLRQITNHMIRF. The Mitochondrial intermembrane portion of the chain corresponds to 192-212; the sequence is PTFYAISDYLKGGDHSVHLPV. A helical transmembrane segment spans residues 213-229; it reads WQNLSAGAIAGTASTLF. The Mitochondrial matrix segment spans residues 230–275; it reads NNPLDTIKTRMQKQGQNQTTMQVVRGIYQETGVKGYWAGVIPRILR. A helical membrane pass occupies residues 276–296; the sequence is VAPGQAITWAVVELVMGILEP. The Mitochondrial intermembrane segment spans residues 297–301; it reads SSKKH.

The protein belongs to the mitochondrial carrier (TC 2.A.29) family.

The protein localises to the mitochondrion inner membrane. Its function is as follows. Mitochondrial solute carriers shuttle metabolites, nucleotides, and cofactors through the mitochondrial inner membrane. The chain is Mitochondrial substrate carrier family protein Z (mcfZ) from Dictyostelium discoideum (Social amoeba).